The sequence spans 448 residues: tRNA modification GTPase MnmE (448 aa).

Arg24, Glu81, and Lys120 together coordinate (6S)-5-formyl-5,6,7,8-tetrahydrofolate. Positions 216-373 (GLNVVLVGAP…LKRTLLREAG (158 aa)) constitute a TrmE-type G domain. Position 226 (Asn226) interacts with K(+). GTP is bound by residues 226–231 (NVGKSS), 245–251 (TDIAGTT), and 270–273 (DTAG). Ser230 is a binding site for Mg(2+). K(+) contacts are provided by Thr245, Ile247, and Thr250. Thr251 provides a ligand contact to Mg(2+). Lys448 lines the (6S)-5-formyl-5,6,7,8-tetrahydrofolate pocket.

This sequence belongs to the TRAFAC class TrmE-Era-EngA-EngB-Septin-like GTPase superfamily. TrmE GTPase family. Homodimer. Heterotetramer of two MnmE and two MnmG subunits. The cofactor is K(+).

The protein resides in the cytoplasm. Its function is as follows. Exhibits a very high intrinsic GTPase hydrolysis rate. Involved in the addition of a carboxymethylaminomethyl (cmnm) group at the wobble position (U34) of certain tRNAs, forming tRNA-cmnm(5)s(2)U34. In Neisseria meningitidis serogroup B (strain ATCC BAA-335 / MC58), this protein is tRNA modification GTPase MnmE.